The chain runs to 172 residues: uncharacterized protein (172 aa).

Residues 109–129 traverse the membrane as a helical segment; that stretch reads MLLLYLYYNLLLLTASTPLTF.

The protein resides in the membrane. This is an uncharacterized protein from Saccharomyces cerevisiae (strain ATCC 204508 / S288c) (Baker's yeast).